The chain runs to 926 residues: Alpha-L-rhamnosidase (926 aa).

Residues 1-25 (MILHKSVFKSYIYVLTYFVFFSVMS) form the signal peptide. The N-palmitoyl cysteine moiety is linked to residue Cys-26. Residue Cys-26 is the site of S-diacylglycerol cysteine attachment. Alpha-L-rhamnose contacts are provided by residues Asp-504, 508–510 (RDE), Asp-517, and Trp-569. Catalysis depends on Glu-510, which acts as the Proton donor. Glu-779 functions as the Proton acceptor in the catalytic mechanism. His-800 serves as a coordination point for alpha-L-rhamnose.

This sequence belongs to the glycosyl hydrolase 78 family.

Its subcellular location is the cell membrane. It catalyses the reaction Hydrolysis of terminal non-reducing alpha-L-rhamnose residues in alpha-L-rhamnosides.. Functionally, alpha-L-rhamnosidase involved in ulvan degradation. Ulvan is the main polysaccharide component of the Ulvales (green seaweed) cell wall. It is composed of disaccharide building blocks comprising 3-sulfated rhamnose (Rha3S) linked to D-glucuronic acid (GlcA), L-iduronic acid (IduA), or D-xylose (Xyl). Alpha-L-rhamnosidase converts Rha-Xyl-Rha3S, the product of a sulfatase acting on Rha3S-Xyl-Rha3S oligosaccharides, to Rha and Xyl-Rha3S. The enzyme is able to degrade p-nitrophenyl-alpha-L-rhamnopyranoside (PNP-Rha) in vitro. In Formosa agariphila (strain DSM 15362 / KCTC 12365 / LMG 23005 / KMM 3901 / M-2Alg 35-1), this protein is Alpha-L-rhamnosidase.